The chain runs to 501 residues: Mitogen-activated protein kinase 16 (501 aa).

Positions 22 to 313 constitute a Protein kinase domain; it reads YEVTEVVGKG…AAEALTDPYF (292 aa). ATP-binding positions include 28-36 and lysine 51; that span reads VGKGSYGVV. Aspartate 148 serves as the catalytic Proton acceptor. Position 184 is a phosphothreonine (threonine 184). Positions 184–186 match the TXY motif; it reads TDY. Position 186 is a phosphotyrosine (tyrosine 186). A disordered region spans residues 477-501; the sequence is DEESMSEYMNEAADGVPHKIAQLKT.

Belongs to the protein kinase superfamily. CMGC Ser/Thr protein kinase family. MAP kinase subfamily. In terms of processing, dually phosphorylated on Thr-184 and Tyr-186, which activates the enzyme.

The enzyme catalyses L-seryl-[protein] + ATP = O-phospho-L-seryl-[protein] + ADP + H(+). It catalyses the reaction L-threonyl-[protein] + ATP = O-phospho-L-threonyl-[protein] + ADP + H(+). With respect to regulation, activated by threonine and tyrosine phosphorylation. This Oryza sativa subsp. japonica (Rice) protein is Mitogen-activated protein kinase 16 (MPK16).